The primary structure comprises 165 residues: Nucleotide-binding protein CHY_1197 (165 aa).

This sequence belongs to the YajQ family.

In terms of biological role, nucleotide-binding protein. This is Nucleotide-binding protein CHY_1197 from Carboxydothermus hydrogenoformans (strain ATCC BAA-161 / DSM 6008 / Z-2901).